The sequence spans 284 residues: Pantothenate synthetase (284 aa).

30 to 37 (MGNLHEGH) is an ATP binding site. Histidine 37 serves as the catalytic Proton donor. Glutamine 61 contacts (R)-pantoate. Glutamine 61 contacts beta-alanine. Residue 149 to 152 (GEKD) participates in ATP binding. Glutamine 155 provides a ligand contact to (R)-pantoate. ATP-binding positions include valine 178 and 186–189 (LSSR).

It belongs to the pantothenate synthetase family. Homodimer.

It localises to the cytoplasm. The enzyme catalyses (R)-pantoate + beta-alanine + ATP = (R)-pantothenate + AMP + diphosphate + H(+). The protein operates within cofactor biosynthesis; (R)-pantothenate biosynthesis; (R)-pantothenate from (R)-pantoate and beta-alanine: step 1/1. Catalyzes the condensation of pantoate with beta-alanine in an ATP-dependent reaction via a pantoyl-adenylate intermediate. The polypeptide is Pantothenate synthetase (Yersinia pestis bv. Antiqua (strain Antiqua)).